We begin with the raw amino-acid sequence, 131 residues long: Sec-independent protein translocase protein TatB (131 aa).

The chain crosses the membrane as a helical span at residues Leu2–Gly22. Positions Ala96–Thr131 are disordered. Residues Gln107 to Pro116 show a composition bias toward pro residues.

It belongs to the TatB family. The Tat system comprises two distinct complexes: a TatABC complex, containing multiple copies of TatA, TatB and TatC subunits, and a separate TatA complex, containing only TatA subunits. Substrates initially bind to the TatABC complex, which probably triggers association of the separate TatA complex to form the active translocon.

It localises to the cell membrane. Part of the twin-arginine translocation (Tat) system that transports large folded proteins containing a characteristic twin-arginine motif in their signal peptide across membranes. Together with TatC, TatB is part of a receptor directly interacting with Tat signal peptides. TatB may form an oligomeric binding site that transiently accommodates folded Tat precursor proteins before their translocation. This chain is Sec-independent protein translocase protein TatB, found in Mycobacterium avium (strain 104).